A 137-amino-acid polypeptide reads, in one-letter code: Methylglyoxal synthase (137 aa).

The region spanning Met-1–Ile-137 is the MGS-like domain. Substrate-binding positions include His-8, Lys-12, Thr-34–Thr-37, and Ser-54–Gly-55. Asp-60 acts as the Proton donor/acceptor in catalysis. Residue His-87 coordinates substrate.

This sequence belongs to the methylglyoxal synthase family.

It carries out the reaction dihydroxyacetone phosphate = methylglyoxal + phosphate. In terms of biological role, catalyzes the formation of methylglyoxal from dihydroxyacetone phosphate. The chain is Methylglyoxal synthase from Clostridioides difficile (strain 630) (Peptoclostridium difficile).